The primary structure comprises 52 residues: Light-harvesting protein B-870 alpha chain (52 aa).

The Cytoplasmic portion of the chain corresponds to 1–15; it reads MAKFYKIWLIFDPRR. The chain crosses the membrane as a helical span at residues 16–36; it reads VFVAQGVFLFLLAAMIHLVVL. Residue His-32 coordinates a bacteriochlorophyll. The Periplasmic portion of the chain corresponds to 37 to 52; sequence SSGLNWFEAAAAVGGQ.

Belongs to the antenna complex alpha subunit family. In terms of assembly, the core complex is formed by different alpha and beta chains, binding bacteriochlorophyll molecules, and arranged most probably in tetrameric structures disposed around the reaction center. The non-pigmented gamma chains may constitute additional components.

It localises to the cell inner membrane. In terms of biological role, antenna complexes are light-harvesting systems, which transfer the excitation energy to the reaction centers. This Roseobacter denitrificans (strain ATCC 33942 / OCh 114) (Erythrobacter sp. (strain OCh 114)) protein is Light-harvesting protein B-870 alpha chain (pufA).